Consider the following 507-residue polypeptide: L-threonine dehydratase biosynthetic IlvA (507 aa).

Lysine 52 is modified (N6-(pyridoxal phosphate)lysine). Pyridoxal 5'-phosphate contacts are provided by residues asparagine 79, 182–186 (GGGGL), and serine 309. ACT-like domains follow at residues 333 to 404 (AVFA…DLTH) and 427 to 498 (RLFR…EESA).

It belongs to the serine/threonine dehydratase family. Homotetramer. Pyridoxal 5'-phosphate is required as a cofactor.

The enzyme catalyses L-threonine = 2-oxobutanoate + NH4(+). It participates in amino-acid biosynthesis; L-isoleucine biosynthesis; 2-oxobutanoate from L-threonine: step 1/1. Functionally, catalyzes the anaerobic formation of alpha-ketobutyrate and ammonia from threonine in a two-step reaction. The first step involved a dehydration of threonine and a production of enamine intermediates (aminocrotonate), which tautomerizes to its imine form (iminobutyrate). Both intermediates are unstable and short-lived. The second step is the nonenzymatic hydrolysis of the enamine/imine intermediates to form 2-ketobutyrate and free ammonia. In the low water environment of the cell, the second step is accelerated by RidA. The sequence is that of L-threonine dehydratase biosynthetic IlvA (ilvA) from Burkholderia multivorans (strain ATCC 17616 / 249).